The chain runs to 477 residues: V-type ATP synthase beta chain (477 aa).

It belongs to the ATPase alpha/beta chains family.

In terms of biological role, produces ATP from ADP in the presence of a proton gradient across the membrane. The V-type beta chain is a regulatory subunit. The sequence is that of V-type ATP synthase beta chain from Anaeromyxobacter dehalogenans (strain 2CP-1 / ATCC BAA-258).